Here is a 1044-residue protein sequence, read N- to C-terminus: Diacylglycerol lipase-alpha (1044 aa).

Residues 1 to 22 are Cytoplasmic-facing; the sequence is MPGIVVFRRRWSVGSDDLVLPA. Residues 23–43 form a helical membrane-spanning segment; that stretch reads IFLFLLHTTWFVILSVVLFGL. The Extracellular segment spans residues 44 to 60; the sequence is VYNPHEACSLNLVDHGR. Residues 61–81 form a helical membrane-spanning segment; sequence GYLGILLSCMIAEMAIIWLSM. The Cytoplasmic portion of the chain corresponds to 82 to 101; it reads RGGILYTEPRDSMQYVLYVR. Residues 102–122 form a helical membrane-spanning segment; that stretch reads LAILVIEFIYAIVGIVWLTQY. Over 123–136 the chain is Extracellular; the sequence is YTSCNDLTAKNVTL. N-linked (GlcNAc...) asparagine glycosylation is present at asparagine 133. Residues 137 to 157 form a helical membrane-spanning segment; the sequence is GMVVCNWVVILSVCITVLCVF. Residues 158–1044 lie on the Cytoplasmic side of the membrane; the sequence is DPTGRTFVKL…KQDDLVISAR (887 aa). Active-site charge relay system residues include serine 472 and aspartate 524. Phosphoserine occurs at positions 728, 730, 733, 744, 784, 786, 808, 810, 835, 849, and 954. Positions 848-897 are disordered; the sequence is LSKHSQDTQPLEAALGSGGVTPERPPSATIEEEEAAGGSEGGGVAPRGEL. Residues 1013 to 1044 are disordered; sequence QECLATDKIRTSTPTGHGASPTKQDDLVISAR. The residue at position 1025 (threonine 1025) is a Phosphothreonine.

Belongs to the AB hydrolase superfamily. Lipase family. Interacts (via C-terminal) with CAMK2A; leading to the phosphorylation and inhibition of DAGLA enzymatic activity. Interacts (via PPXXF motif) with HOMER1 and HOMER2; this interaction is required for DAGLA membrane localization. Ca(2+) serves as cofactor. In terms of processing, phosphorylated at Ser-784 and Ser-810 by CAMK2A; phosphorylation by CAMK2A inhibits diacylglycerol lipase activity. As to expression, highly expressed by principal cells in the hippocampus. In embryonic brains, it is present in axonal tracts, while in adults it localizes to dendritic fields, correlating with the developmental change in requirement for 2-AG synthesis from the pre- to the postsynaptic compartment. Concentrated in heads of dendritic spines throughout the hippocampal formation. Highly compartmentalized into a wide perisynaptic annulus around the postsynaptic density of axospinous contacts but not intrasynaptically (at protein level).

The protein localises to the cell membrane. Its subcellular location is the cell projection. It is found in the dendritic spine membrane. The protein resides in the postsynaptic density membrane. It localises to the early endosome membrane. The catalysed reaction is a 1,2-diacyl-sn-glycerol + H2O = a 2-acylglycerol + a fatty acid + H(+). It catalyses the reaction 1-octadecanoyl-2-(5Z,8Z,11Z,14Z-eicosatetraenoyl)-sn-glycerol + H2O = 2-(5Z,8Z,11Z,14Z-eicosatetraenoyl)-glycerol + octadecanoate + H(+). It carries out the reaction 1,2-di-(9Z-octadecenoyl)-sn-glycerol + H2O = 2-(9Z-octadecenoyl)-glycerol + (9Z)-octadecenoate + H(+). The enzyme catalyses 1-(9Z-octadecenoyl)-2-(5Z,8Z,11Z,14Z-eicosatetraenoyl)-sn-glycerol + H2O = 2-(5Z,8Z,11Z,14Z-eicosatetraenoyl)-glycerol + (9Z)-octadecenoate + H(+). The catalysed reaction is 1-(9Z-octadecenoyl)-2-octadecanoyl-sn-glycerol + H2O = 2-octadecanoylglycerol + (9Z)-octadecenoate + H(+). It catalyses the reaction 1-(9Z-octadecenoyl)-2-(9Z,12Z-octadecadienoyl)-sn-glycerol + H2O = 2-(9Z,12Z-octadecadienoyl)-glycerol + (9Z)-octadecenoate + H(+). It carries out the reaction 1-(9Z-octadecenoyl)-2-O-(5Z,8Z,11Z,14Z-eicosatetraenyl)-sn-glycerol + H2O = 2-O-(5Z,8Z,11Z,14Z)-eicosatetraenylglycerol + (9Z)-octadecenoate + H(+). Inhibited by 1,2,3-triazole urea covalent inhibitor KT172, DH376 and DO34. Inhibited by p-hydroxy-mercuri-benzoate and HgCl(2), but not to PMSF. Also inhibited by RHC80267. Diacylglycerol lipase activity is inhibited by the phosphorylation of Ser-784 and Ser-810 by CAMK2A. Its function is as follows. Serine hydrolase that hydrolyzes arachidonic acid-esterified diacylglycerols (DAGs) to produce the principal endocannabinoid (eCB), 2-arachidonoylglycerol (2-AG). Preferentially hydrolyzes sn-1 fatty acids from diacylglycerols (DAG) that contain arachidonic acid (AA) esterified at the sn-2 position to biosynthesize 2-AG. Has negligible activity against other lipids including monoacylglycerols and phospholipids. Plays a key role in regulating 2-AG signaling in the central nervous system (CNS). Controls the activity of 2-AG as a retrograde messenger at neuronal synapses. Supports axonal growth during development and adult neurogenesis. Plays a role for eCB signaling in the physiological regulation of anxiety and depressive behaviors. Also regulates neuroinflammatory responses in the brain, in particular, LPS-induced microglial activation. This is Diacylglycerol lipase-alpha (Dagla) from Mus musculus (Mouse).